A 289-amino-acid polypeptide reads, in one-letter code: Enoyl-CoA delta isomerase 1, mitochondrial (289 aa).

A mitochondrion-targeting transit peptide spans 1 to 28 (MALAAARRVLLQAGSRLGRRGAVDGARR). Lys-48 is modified (N6-acetyllysine; alternate). Lys-48 bears the N6-succinyllysine; alternate mark. Lys-71 bears the N6-succinyllysine mark. Lys-76 carries the post-translational modification N6-acetyllysine. Substrate is bound by residues 93 to 97 (AGLDL), Gly-140, and Asn-164. Residues Lys-222, Lys-229, and Lys-255 each carry the N6-acetyllysine; alternate modification. An N6-succinyllysine; alternate mark is found at Lys-222, Lys-229, and Lys-255. An N6-succinyllysine modification is found at Lys-275. N6-acetyllysine; alternate is present on Lys-283. An N6-succinyllysine; alternate modification is found at Lys-283.

This sequence belongs to the enoyl-CoA hydratase/isomerase family. Homotrimer.

Its subcellular location is the mitochondrion matrix. The catalysed reaction is a (3Z)-enoyl-CoA = a 4-saturated (2E)-enoyl-CoA. It carries out the reaction a (3E)-enoyl-CoA = a 4-saturated (2E)-enoyl-CoA. It catalyses the reaction (3Z)-octenoyl-CoA = (2E)-octenoyl-CoA. The enzyme catalyses (2E)-tetradecenoyl-CoA = (3Z)-tetradecenoyl-CoA. The catalysed reaction is (3Z)-dodecenoyl-CoA = (2E)-dodecenoyl-CoA. It carries out the reaction (3Z)-hexenoyl-CoA = (2E)-hexenoyl-CoA. It catalyses the reaction (3Z)-decenoyl-CoA = (2E)-decenoyl-CoA. The protein operates within lipid metabolism; fatty acid beta-oxidation. Its function is as follows. Key enzyme of fatty acid beta-oxidation. Able to isomerize both 3-cis (3Z) and 3-trans (3E) double bonds into the 2-trans (2E) form in a range of enoyl-CoA species, with a preference for (3Z)-enoyl-CoAs over (3E)-enoyl-CoAs. The catalytic efficiency of this enzyme is not affected by the fatty acyl chain length. The chain is Enoyl-CoA delta isomerase 1, mitochondrial from Rattus norvegicus (Rat).